The sequence spans 226 residues: Glutathione S-transferase kappa 1 (226 aa).

Residue 16–18 participates in glutathione binding; that stretch reads SPY. The residue at position 49 (Lys49) is an N6-succinyllysine. Asn53 provides a ligand contact to glutathione. N6-acetyllysine occurs at positions 71 and 85. At Lys116 the chain carries N6-acetyllysine; alternate. At Lys116 the chain carries N6-succinyllysine; alternate. At Lys144 the chain carries N6-succinyllysine. Lys158 bears the N6-acetyllysine; alternate mark. Lys158 carries the post-translational modification N6-succinyllysine; alternate. Lys165 and Lys169 each carry N6-acetyllysine. Residues Leu183 and 200 to 201 each bind glutathione; that span reads SD.

This sequence belongs to the GST superfamily. Kappa family. As to quaternary structure, homodimer. In terms of tissue distribution, ubiquitous.

The protein resides in the peroxisome. It catalyses the reaction RX + glutathione = an S-substituted glutathione + a halide anion + H(+). Glutathione S-transferase that catalyzes the conjugation of glutathione to exogenous and endogenous compounds. Significant glutathione conjugating activity is found only with the model substrate, 1-chloro-2,4-dinitrobenzene (CDNB). This chain is Glutathione S-transferase kappa 1 (GSTK1), found in Homo sapiens (Human).